Consider the following 150-residue polypeptide: Nucleoside diphosphate kinase (150 aa).

6 residues coordinate ATP: Lys-10, Phe-58, Arg-86, Thr-92, Arg-103, and Asn-113. The Pros-phosphohistidine intermediate role is filled by His-116.

This sequence belongs to the NDK family. Mg(2+) is required as a cofactor.

The protein localises to the cytoplasm. It catalyses the reaction a 2'-deoxyribonucleoside 5'-diphosphate + ATP = a 2'-deoxyribonucleoside 5'-triphosphate + ADP. It carries out the reaction a ribonucleoside 5'-diphosphate + ATP = a ribonucleoside 5'-triphosphate + ADP. In terms of biological role, major role in the synthesis of nucleoside triphosphates other than ATP. The ATP gamma phosphate is transferred to the NDP beta phosphate via a ping-pong mechanism, using a phosphorylated active-site intermediate. The chain is Nucleoside diphosphate kinase from Methanobrevibacter smithii (strain ATCC 35061 / DSM 861 / OCM 144 / PS).